The chain runs to 30 residues: Kalata-B10 (30 aa).

The segment at residues 1-30 (GLPTCGETCFGGTCNTPGCSCSSWPICTRD) is a cross-link (cyclopeptide (Gly-Asp)). 3 disulfide bridges follow: C5–C19, C9–C21, and C14–C27.

Belongs to the cyclotide family. Moebius subfamily. In terms of processing, this peptide occurs in both cyclic and linear forms. The linear form contains unmodified Trp-24, the cyclic peptide occurs in two forms with unmodified Trp-24, and with Trp-24 oxidized to form oxindolylalanine. Oxidation is enhanced by exposure to sunlight.

Its function is as follows. Probably participates in a plant defense mechanism. The protein is Kalata-B10 of Oldenlandia affinis.